We begin with the raw amino-acid sequence, 312 residues long: Olfactory receptor 4K17 (312 aa).

At 1–25 (MKLLNQSQVSEFILLGLTSSQDVEF) the chain is on the extracellular side. A glycan (N-linked (GlcNAc...) asparagine) is linked at Asn5. Residues 26–49 (LLFALFSVIYVVTVLGNLLIIVTV) form a helical membrane-spanning segment. The Cytoplasmic segment spans residues 50–57 (FNTPNLNT). A helical transmembrane segment spans residues 58–79 (PMYFLLGNLSFVDMTLASFATP). The Extracellular segment spans residues 80–100 (KVILNLLKKQKVISFAGCFTQ). A disulfide bridge links Cys97 with Cys189. A helical membrane pass occupies residues 101–120 (IFLLHLLGGVEMVLLVSMAF). At 121–139 (DRYVAICKPLHYMTIMNKK) the chain is on the cytoplasmic side. The helical transmembrane segment at 140 to 158 (VCVLLVVTSWLLGLLHSGF) threads the bilayer. Residues 159-195 (QIPFAVNLPFCGPNVVDSIFCDLPLVTKLACIDIYFV) are Extracellular-facing. The helical transmembrane segment at 196–219 (QVVIVANSGIISLSCFIILLISYS) threads the bilayer. The Cytoplasmic portion of the chain corresponds to 220 to 235 (LILITIKNHSPTGQSK). A helical membrane pass occupies residues 236–258 (ARSTLTAHITVVILFFGPCIFIY). Topologically, residues 259–269 (IWPFGNHSVDK) are extracellular. Asn264 carries an N-linked (GlcNAc...) asparagine glycan. Residues 270-289 (FLAVFYTIITPILNPIIYTL) form a helical membrane-spanning segment. The Cytoplasmic portion of the chain corresponds to 290-312 (RNKEMKISMKKLWRAFVNSREDT).

The protein belongs to the G-protein coupled receptor 1 family.

It is found in the cell membrane. Functionally, odorant receptor. The protein is Olfactory receptor 4K17 (OR4K17) of Homo sapiens (Human).